An 88-amino-acid polypeptide reads, in one-letter code: Putative septation protein SpoVG (88 aa).

The protein belongs to the SpoVG family.

Could be involved in septation. This Caldicellulosiruptor bescii (strain ATCC BAA-1888 / DSM 6725 / KCTC 15123 / Z-1320) (Anaerocellum thermophilum) protein is Putative septation protein SpoVG.